The chain runs to 1015 residues: Probable beta-galactosidase B (1015 aa).

The N-terminal stretch at 1–20 (MAHIYRLLLLLLSNLWFSTA) is a signal peptide. Residue Asn23 is glycosylated (N-linked (GlcNAc...) asparagine). Substrate is bound at residue Tyr90. N-linked (GlcNAc...) asparagine glycosylation is found at Asn99 and Asn100. Residues Asn135, Ala136, and Glu137 each coordinate substrate. Residue Asn172 is glycosylated (N-linked (GlcNAc...) asparagine). Substrate is bound at residue Asn195. Catalysis depends on Glu196, which acts as the Proton donor. Residue Asn211 is glycosylated (N-linked (GlcNAc...) asparagine). Residue Tyr265 participates in substrate binding. Cys271 and Cys324 are oxidised to a cystine. The Nucleophile role is filled by Glu308. Position 373 (Tyr373) interacts with substrate. Asn411, Asn456, Asn554, Asn679, Asn735, Asn775, and Asn821 each carry an N-linked (GlcNAc...) asparagine glycan.

The protein belongs to the glycosyl hydrolase 35 family.

The protein localises to the secreted. It carries out the reaction Hydrolysis of terminal non-reducing beta-D-galactose residues in beta-D-galactosides.. Its function is as follows. Cleaves beta-linked terminal galactosyl residues from gangliosides, glycoproteins, and glycosaminoglycans. This chain is Probable beta-galactosidase B (lacB), found in Aspergillus fumigatus (strain CBS 144.89 / FGSC A1163 / CEA10) (Neosartorya fumigata).